The following is a 570-amino-acid chain: Keratin, type I cytoskeletal 10 (570 aa).

Low complexity predominate over residues 1–16; the sequence is MSVLYSSSSKQFSSSR. The disordered stretch occupies residues 1-29; that stretch reads MSVLYSSSSKQFSSSRSGGGGGGGSVRVS. Residues 1–143 form a head region; the sequence is MSVLYSSSSK…GDGGSLLSGN (143 aa). Residues S15 and S17 each carry the phosphoserine modification. R32 carries the post-translational modification Asymmetric dimethylarginine; alternate. At R32 the chain carries Omega-N-methylarginine; alternate. Phosphoserine occurs at positions 34, 45, 48, and 168. Residues 144–179 form a coil 1A region; it reads GRVTMQNLNDRLASYMDKVRALEESNYELEGKIKEW. Residues 144–458 form the IF rod domain; the sequence is GRVTMQNLND…SLLEGEGSSS (315 aa). A linker 1 region spans residues 180–200; it reads YEKHGNSSQREPRDYSKYYKT. Residues 201 to 292 are coil 1B; the sequence is IEDLKGQILT…KNHEEEMRDL (92 aa). The interval 293 to 315 is linker 12; the sequence is QNVSTGDVNVEMNAAPGVDLTQL. Positions 316 to 454 are coil 2; sequence LNNMRNQYEQ…QTYRSLLEGE (139 aa). Positions 451–570 are disordered; that stretch reads LEGEGSSSGG…GDQSSKGPRY (120 aa). Residues 455-570 are tail; the sequence is GSSSGGGGGR…GDQSSKGPRY (116 aa). The span at 456–562 shows a compositional bias: gly residues; sequence SSSGGGGGRR…GGFKSSGGGD (107 aa).

It belongs to the intermediate filament family. As to quaternary structure, (Microbial infection) Interacts (via C-terminal tail domain) with the S.aureus clumping factor, clfB; this interaction probably mediates S.aureus attachment to the highly keratinized squamous epithelial cells from the nasal cavity. Heterotetramer of two type I and two type II keratins. Heterodimer with KRT1. Two heterodimers of KRT1 and KRT10 form a heterotetramer. The KRT10 subunit in the heterotetramer is probably disulfide-linked. Interacts with PLEC isoform 1C, when in a heterodimer with KRT1. In terms of assembly, (Microbial infection) Interacts (via the C-terminal tail domain) with S.pneumoniae serine-rich repeat protein PsrP; this interaction probably mediates S.pneumoniae adherence to lung tissue and subsequent pathogenesis. In terms of tissue distribution, expressed in the suprabasal layers of the epidermis throughout the entire sole (at protein level). Expressed in the infundibular regions of the ear, the interscale regions of the tail, and the interfollicular epidermis of the back. Expressed in lung tissue from young mice (at protein level).

The protein localises to the secreted. The protein resides in the extracellular space. It is found in the cell surface. Its subcellular location is the cytoplasm. Functionally, plays a role in the establishment of the epidermal barrier on plantar skin. Involved in the maintenance of cell layer development and keratin filament bundles in suprabasal cells of the epithelium. Its function is as follows. (Microbial infection) Acts as a mediator of S.aureus adherence to desquamated nasal epithelial cells via clfB, and hence may play a role in nasal colonization. In terms of biological role, (Microbial infection) Binds S.pneumoniae PsrP, mediating adherence of the bacteria to lung cell lines. This is Keratin, type I cytoskeletal 10 (Krt10) from Mus musculus (Mouse).